Here is a 449-residue protein sequence, read N- to C-terminus: Ribosomal protein uS12 methylthiotransferase RimO (449 aa).

The region spanning 5–116 (PTIAISHLGC…IVDVVQRVEN (112 aa)) is the MTTase N-terminal domain. C14, C50, C79, C154, C158, and C161 together coordinate [4Fe-4S] cluster. Positions 140 to 369 (TTTEGVAYLR…MEVQQPISIK (230 aa)) constitute a Radical SAM core domain. The TRAM domain maps to 372-438 (QNCIGQTVPV…VYDLYGKTNL (67 aa)).

This sequence belongs to the methylthiotransferase family. RimO subfamily. Requires [4Fe-4S] cluster as cofactor.

The protein localises to the cytoplasm. The catalysed reaction is L-aspartate(89)-[ribosomal protein uS12]-hydrogen + (sulfur carrier)-SH + AH2 + 2 S-adenosyl-L-methionine = 3-methylsulfanyl-L-aspartate(89)-[ribosomal protein uS12]-hydrogen + (sulfur carrier)-H + 5'-deoxyadenosine + L-methionine + A + S-adenosyl-L-homocysteine + 2 H(+). Catalyzes the methylthiolation of an aspartic acid residue of ribosomal protein uS12. This is Ribosomal protein uS12 methylthiotransferase RimO from Rippkaea orientalis (strain PCC 8801 / RF-1) (Cyanothece sp. (strain PCC 8801)).